The following is a 228-amino-acid chain: Cytidylate kinase (228 aa).

12–20 (GPSGSGKGT) provides a ligand contact to ATP.

Belongs to the cytidylate kinase family. Type 1 subfamily.

The protein resides in the cytoplasm. The enzyme catalyses CMP + ATP = CDP + ADP. It catalyses the reaction dCMP + ATP = dCDP + ADP. The polypeptide is Cytidylate kinase (Pseudomonas putida (strain W619)).